A 316-amino-acid polypeptide reads, in one-letter code: N-acetyl-gamma-glutamyl-phosphate reductase (316 aa).

C136 is a catalytic residue.

It belongs to the NAGSA dehydrogenase family. Type 1 subfamily.

It is found in the cytoplasm. It catalyses the reaction N-acetyl-L-glutamate 5-semialdehyde + phosphate + NADP(+) = N-acetyl-L-glutamyl 5-phosphate + NADPH + H(+). Its pathway is amino-acid biosynthesis; L-arginine biosynthesis; N(2)-acetyl-L-ornithine from L-glutamate: step 3/4. Functionally, catalyzes the NADPH-dependent reduction of N-acetyl-5-glutamyl phosphate to yield N-acetyl-L-glutamate 5-semialdehyde. This chain is N-acetyl-gamma-glutamyl-phosphate reductase, found in Xanthomonas axonopodis pv. citri (strain 306).